The following is a 537-amino-acid chain: Organic anion transporter 3 (537 aa).

At 1-11 the chain is on the cytoplasmic side; sequence MTFSEILDRVG. At S4 the chain carries Phosphoserine. A helical membrane pass occupies residues 12–32; sequence SMGPFQYLHVTLLALPILGIA. Over 33–123 the chain is Extracellular; it reads NHNLLQIFTA…LVCGSNKLKE (91 aa). N81 carries an N-linked (GlcNAc...) asparagine glycan. The helical transmembrane segment at 124–144 threads the bilayer; that stretch reads MAQSVFMAGILVGGPVFGELS. At 145–150 the chain is on the cytoplasmic side; that stretch reads DRFGRK. The helical transmembrane segment at 151–171 threads the bilayer; the sequence is PILTWSYLLLAASGSSAAFSP. Over 172 to 176 the chain is Extracellular; the sequence is SLTVY. Residues 177–197 form a helical membrane-spanning segment; that stretch reads MIFRFLCGCSISGISLSTIIL. At 198 to 212 the chain is on the cytoplasmic side; it reads NVEWVPTSTRAISST. A helical transmembrane segment spans residues 213-233; that stretch reads TIGYCYTIGQFILPGLAYAVP. Over 234–236 the chain is Extracellular; the sequence is QWR. The chain crosses the membrane as a helical span at residues 237 to 257; sequence WLQLSVSAAFFIFSLLSWWVP. The Cytoplasmic segment spans residues 258 to 327; that stretch reads ESIRWLVLSG…FRVSILRRVT (70 aa). A helical transmembrane segment spans residues 328-348; it reads FCLSLAWFATGFAYYSLAMGV. The Extracellular segment spans residues 349 to 354; the sequence is EEFGVN. Residues 355–375 traverse the membrane as a helical segment; it reads IYILQIIFGGVDIPAKFITIL. Residues 376–383 are Cytoplasmic-facing; sequence SISYLGRR. Residues 384 to 404 traverse the membrane as a helical segment; it reads ITQGFLLILAGVAILALIFVS. Residues 405 to 411 are Extracellular-facing; the sequence is SEMQLLR. A helical membrane pass occupies residues 412 to 432; the sequence is TALAVFGKGCLSGSFSCLFLY. Residues 433-471 are Cytoplasmic-facing; it reads TSELYPTVLRQTGMGISNIWARVGSMIAPLVKITGELQP. Residues 472-492 form a helical membrane-spanning segment; the sequence is FIPNVIFGTMTLLGGSAAFFL. At 493 to 537 the chain is on the extracellular side; the sequence is LETLNRPLPETIEDIQDWYQQTKKTKQEPEAEKASQTIPLKTGGP. The interval 513–537 is disordered; sequence QTKKTKQEPEAEKASQTIPLKTGGP.

Belongs to the major facilitator (TC 2.A.1) superfamily. Organic cation transporter (TC 2.A.1.19) family. In terms of tissue distribution, expressed mainly in kidney. In kidney, detected in almost all parts of the nephron, including macula densa cells. Expressed (at protein level) throughout the renal cortex. Widely distributed in the brain with no large regional differences. Expressed in the choroid plexus (CP, located in the ventricles of the brain). Expressed in developing bone. Weakly expressed in brain and eye.

The protein localises to the basolateral cell membrane. It carries out the reaction estrone 3-sulfate(out) + glutarate(in) = estrone 3-sulfate(in) + glutarate(out). The catalysed reaction is estrone 3-sulfate(in) + 2-oxoglutarate(out) = estrone 3-sulfate(out) + 2-oxoglutarate(in). It catalyses the reaction taurocholate(out) + glutarate(in) = taurocholate(in) + glutarate(out). The enzyme catalyses dehydroepiandrosterone 3-sulfate(out) + glutarate(in) = dehydroepiandrosterone 3-sulfate(in) + glutarate(out). It carries out the reaction glutarate(in) + 2-oxoglutarate(out) = glutarate(out) + 2-oxoglutarate(in). The catalysed reaction is urate(in) + 2-oxoglutarate(out) = urate(out) + 2-oxoglutarate(in). It catalyses the reaction prostaglandin F2alpha(out) + glutarate(in) = prostaglandin F2alpha(in) + glutarate(out). The enzyme catalyses prostaglandin F2alpha(out) + 2-oxoglutarate(in) = prostaglandin F2alpha(in) + 2-oxoglutarate(out). It carries out the reaction (R)-carnitine(out) + 2-oxoglutarate(in) = (R)-carnitine(in) + 2-oxoglutarate(out). The catalysed reaction is glutarate(in) + (R)-carnitine(out) = glutarate(out) + (R)-carnitine(in). It catalyses the reaction prostaglandin E2(out) + 2-oxoglutarate(in) = prostaglandin E2(in) + 2-oxoglutarate(out). The enzyme catalyses prostaglandin E2(out) + glutarate(in) = prostaglandin E2(in) + glutarate(out). It carries out the reaction urate(in) + glutarate(out) = urate(out) + glutarate(in). The catalysed reaction is taurocholate(out) + 2-oxoglutarate(in) = taurocholate(in) + 2-oxoglutarate(out). It catalyses the reaction dehydroepiandrosterone 3-sulfate(out) + 2-oxoglutarate(in) = dehydroepiandrosterone 3-sulfate(in) + 2-oxoglutarate(out). The enzyme catalyses kynurenate(out) + a dicarboxylate(in) = kynurenate(in) + a dicarboxylate(out). It carries out the reaction (indol-3-yl)acetate(out) + a dicarboxylate(in) = (indol-3-yl)acetate(in) + a dicarboxylate(out). The catalysed reaction is indoxyl sulfate(out) + a dicarboxylate(in) = indoxyl sulfate(in) + a dicarboxylate(out). It catalyses the reaction N-benzoylglycine(out) + a dicarboxylate(in) = N-benzoylglycine(in) + a dicarboxylate(out). The enzyme catalyses 3-carboxy-4-methyl-5-propyl-2-furanpropanoate(out) + a dicarboxylate(in) = 3-carboxy-4-methyl-5-propyl-2-furanpropanoate(in) + a dicarboxylate(out). It carries out the reaction (6R)-L-erythro-5,6,7,8-tetrahydrobiopterin(out) + a dicarboxylate(in) = (6R)-L-erythro-5,6,7,8-tetrahydrobiopterin(in) + a dicarboxylate(out). The catalysed reaction is L-erythro-7,8-dihydrobiopterin(out) + a dicarboxylate(in) = L-erythro-7,8-dihydrobiopterin(in) + a dicarboxylate(out). It catalyses the reaction L-sepiapterin(out) + a dicarboxylate(in) = L-sepiapterin(in) + a dicarboxylate(out). Its activity is regulated as follows. Expression inhibited by androgens such as testosterone. Functionally, functions as an organic anion/dicarboxylate exchanger that couples organic anion uptake indirectly to the sodium gradient. Transports organic anions such as estrone 3-sulfate (E1S) and urate in exchange for dicarboxylates such as glutarate or ketoglutarate (2-oxoglutarate). Plays an important role in the excretion of endogenous and exogenous organic anions, especially from the kidney and the brain. E1S transport is pH- and chloride-dependent and may also involve E1S/cGMP exchange. Responsible for the transport of prostaglandin E2 (PGE2) and prostaglandin F2(alpha) (PGF2(alpha)) in the basolateral side of the renal tubule. Involved in the transport of neuroactive tryptophan metabolites kynurenate and xanthurenate. Functions as a biopterin transporters involved in the uptake and the secretion of coenzymes tetrahydrobiopterin (BH4), dihydrobiopterin (BH2) and sepiapterin to urine, thereby determining baseline levels of blood biopterins. May be involved in the basolateral transport of steviol, a metabolite of the popular sugar substitute stevioside. May participate in the detoxification/ renal excretion of drugs and xenobiotics, such as the histamine H(2)-receptor antagonists fexofenadine and cimetidine, the antibiotic benzylpenicillin (PCG), the anionic herbicide 2,4-dichloro-phenoxyacetate (2,4-D), the diagnostic agent p-aminohippurate (PAH), the antiviral acyclovir (ACV), and the mycotoxin ochratoxin (OTA), by transporting these exogenous organic anions across the cell membrane in exchange for dicarboxylates such as 2-oxoglutarate. May contribute to the release of cortisol in the adrenals. Involved in one of the detoxification systems on the choroid plexus (CP), removes substrates such as E1S or taurocholate (TC), PCG, 2,4-D and PAH, from the cerebrospinal fluid (CSF) to the blood for eventual excretion in urine and bile. Also contributes to the uptake of several other organic compounds such as the prostanoids prostaglandin E(2) and prostaglandin F(2-alpha), L-carnitine, and the therapeutic drugs allopurinol, 6-mercaptopurine (6-MP) and 5-fluorouracil (5-FU). Mediates the transport of PAH, PCG, and the statins pravastatin and pitavastatin, from the cerebrum into the blood circulation across the blood-brain barrier (BBB). Contributes to the renal uptake of potent uremic toxins (indoxyl sulfate (IS), indole acetate (IA), hippurate/N-benzoylglycine (HA) and 3-carboxy-4-methyl-5-propyl-2-furanpropionate (CMPF)), pravastatin, PCG, E1S and dehydroepiandrosterone sulfate (DHEAS), and is partly involved in the renal uptake of temocaprilat (an angiotensin-converting enzyme (ACE) inhibitor). In summary, plays a role in the efflux of drugs and xenobiotics, helping reduce their undesired toxicological effects on the body. In Mus musculus (Mouse), this protein is Organic anion transporter 3 (Slc22a8).